A 795-amino-acid chain; its full sequence is Delta-1-pyrroline-5-carboxylate synthase (795 aa).

The tract at residues 1–361 (MLSQVYRYGF…FFSEVKPAGP (361 aa)) is glutamate 5-kinase. Substrate-binding residues include S117, D223, and N246. ATP contacts are provided by residues 266-267 (SD) and 305-311 (MGGMEAK). Residues K311, K347, and K550 each carry the N6-succinyllysine modification. A gamma-glutamyl phosphate reductase region spans residues 362–795 (TVEQQGEMAR…NLPIPQRNTN (434 aa)).

In the N-terminal section; belongs to the glutamate 5-kinase family. This sequence in the C-terminal section; belongs to the gamma-glutamyl phosphate reductase family. As to quaternary structure, can form homodimers/multimers.

It is found in the mitochondrion matrix. The enzyme catalyses L-glutamate + ATP = L-glutamyl 5-phosphate + ADP. The catalysed reaction is L-glutamate 5-semialdehyde + phosphate + NADP(+) = L-glutamyl 5-phosphate + NADPH + H(+). The protein operates within amino-acid biosynthesis; L-proline biosynthesis; L-glutamate 5-semialdehyde from L-glutamate: step 1/2. It participates in amino-acid biosynthesis; L-proline biosynthesis; L-glutamate 5-semialdehyde from L-glutamate: step 2/2. In terms of biological role, bifunctional enzyme that converts glutamate to glutamate 5-semialdehyde, an intermediate in the biosynthesis of proline, ornithine and arginine. The polypeptide is Delta-1-pyrroline-5-carboxylate synthase (ALDH18A1) (Pongo abelii (Sumatran orangutan)).